Here is a 375-residue protein sequence, read N- to C-terminus: Leucoanthocyanidin dioxygenase 1 (375 aa).

Residues 218–317 (LLLQLKINYY…RLSWVVFCEP (100 aa)) enclose the Fe2OG dioxygenase domain. Fe cation is bound by residues His242, Asp244, and His298. A 2-oxoglutarate-binding site is contributed by Arg308.

Belongs to the iron/ascorbate-dependent oxidoreductase family. It depends on L-ascorbate as a cofactor. Requires Fe(2+) as cofactor.

The enzyme catalyses a (2R,3S,4S)-leucoanthocyanidin + 2-oxoglutarate + O2 = a 4-H-anthocyanidin with a 3-hydroxy group + succinate + CO2 + 2 H2O. Its pathway is pigment biosynthesis; anthocyanin biosynthesis. In terms of biological role, involved in anthocyanin and protoanthocyanidin biosynthesis by catalyzing the oxidation of leucoanthocyanidins into anthocyanidins. Is able to synthesize anthocyanin pigments from leucoanthocyanidins in aleurone tissue. Converts dihydroquercetin to quercetin in vitro. The chain is Leucoanthocyanidin dioxygenase 1 from Oryza sativa subsp. indica (Rice).